The following is a 138-amino-acid chain: Protein NrdI (138 aa).

The protein belongs to the NrdI family.

Functionally, probably involved in ribonucleotide reductase function. The sequence is that of Protein NrdI from Paracoccus denitrificans (strain Pd 1222).